The primary structure comprises 382 residues: Pyrimidine monooxygenase RutA (382 aa).

FMN-binding positions include 68–69 (IK), N134, E143, 159–160 (RY), and S209.

The protein belongs to the NtaA/SnaA/DszA monooxygenase family. RutA subfamily.

The catalysed reaction is uracil + FMNH2 + NADH + O2 = (Z)-3-ureidoacrylate + FMN + NAD(+) + H2O + H(+). It catalyses the reaction thymine + FMNH2 + NADH + O2 = (Z)-2-methylureidoacrylate + FMN + NAD(+) + H2O + H(+). Catalyzes the pyrimidine ring opening between N-3 and C-4 by an unusual flavin hydroperoxide-catalyzed mechanism, adding oxygen atoms in the process to yield ureidoacrylate peracid, that immediately reacts with FMN forming ureidoacrylate and FMN-N(5)-oxide. The FMN-N(5)-oxide reacts spontaneously with NADH to produce FMN. Requires the flavin reductase RutF to regenerate FMN in vivo. In Escherichia coli (strain 55989 / EAEC), this protein is Pyrimidine monooxygenase RutA.